The following is a 526-amino-acid chain: Tyrosine-protein kinase transforming protein Src (526 aa).

A disordered region spans residues Met1–Gly52. Gly2 is lipidated: N-myristoyl glycine; by host. Residues Lys7–His25 show a composition bias toward basic and acidic residues. The 62-residue stretch at Gly81–Ser142 folds into the SH3 domain. The SH2 domain occupies Trp148–Cys245. The Protein kinase domain maps to Leu267 to Leu517. Residues Leu273–Val281 and Lys295 contribute to the ATP site. Asp386 serves as the catalytic Proton acceptor. Tyr416 carries the phosphotyrosine; by autocatalysis modification.

Belongs to the protein kinase superfamily. Tyr protein kinase family. SRC subfamily. It depends on Mn(2+) as a cofactor. Post-translationally, the phosphorylated form is termed pp60v-src.

It carries out the reaction L-tyrosyl-[protein] + ATP = O-phospho-L-tyrosyl-[protein] + ADP + H(+). Functionally, this phosphoprotein, required for both the initiation and the maintenance of neoplastic transformation, is a protein kinase that catalyzes the phosphorylation of tyrosine residues in vitro. This is Tyrosine-protein kinase transforming protein Src (V-SRC) from Gallus gallus (Chicken).